We begin with the raw amino-acid sequence, 360 residues long: Histidinol-phosphate aminotransferase (360 aa).

Position 222 is an N6-(pyridoxal phosphate)lysine (lysine 222).

This sequence belongs to the class-II pyridoxal-phosphate-dependent aminotransferase family. Histidinol-phosphate aminotransferase subfamily. Homodimer. The cofactor is pyridoxal 5'-phosphate.

The enzyme catalyses L-histidinol phosphate + 2-oxoglutarate = 3-(imidazol-4-yl)-2-oxopropyl phosphate + L-glutamate. Its pathway is amino-acid biosynthesis; L-histidine biosynthesis; L-histidine from 5-phospho-alpha-D-ribose 1-diphosphate: step 7/9. The chain is Histidinol-phosphate aminotransferase from Listeria monocytogenes serotype 4b (strain CLIP80459).